The sequence spans 587 residues: Glutamine--tRNA ligase (587 aa).

The 'HIGH' region signature appears at 58–68 (PEPNGYLHIGH). ATP is bound by residues 59–61 (EPN) and 65–71 (HIGHAKS). The L-glutamine site is built by aspartate 91 and tyrosine 240. Residues threonine 259 and 294–295 (RL) each bind ATP. A 'KMSKS' region motif is present at residues 301 to 305 (VTSKR).

Belongs to the class-I aminoacyl-tRNA synthetase family. In terms of assembly, monomer.

The protein resides in the cytoplasm. The catalysed reaction is tRNA(Gln) + L-glutamine + ATP = L-glutaminyl-tRNA(Gln) + AMP + diphosphate. The sequence is that of Glutamine--tRNA ligase from Bordetella pertussis (strain Tohama I / ATCC BAA-589 / NCTC 13251).